A 441-amino-acid chain; its full sequence is Endothelin receptor type B (441 aa).

Positions M1–G26 are cleaved as a signal peptide. The Extracellular portion of the chain corresponds to E27 to K100. Residues E30 to Q90 form a disordered region. Residues L47–R65 are compositionally biased toward polar residues. N60 carries N-linked (GlcNAc...) asparagine glycosylation. A helical membrane pass occupies residues Y101 to I125. Over Y126–N136 the chain is Cytoplasmic. The helical transmembrane segment at I137–L162 threads the bilayer. The Extracellular portion of the chain corresponds to A163 to K174. C173 and C254 are oxidised to a cystine. A helical membrane pass occupies residues L175 to I196. Over D197–T217 the chain is Cytoplasmic. Residues A218–V242 traverse the membrane as a helical segment. The Extracellular portion of the chain corresponds to T243 to T270. Residues A271–M295 form a helical membrane-spanning segment. The Cytoplasmic segment spans residues T296 to T323. Phosphoserine is present on S304. Residues V324–Y349 form a helical membrane-spanning segment. The Extracellular portion of the chain corresponds to D350 to S361. A helical membrane pass occupies residues F362–V388. At S389–S441 the chain is on the cytoplasmic side. 2 S-palmitoyl cysteine lipidation sites follow: C402 and C404. S418 is modified (phosphoserine). Y438 is subject to Phosphotyrosine. A phosphoserine mark is found at S439, S440, and S441.

This sequence belongs to the G-protein coupled receptor 1 family. Endothelin receptor subfamily. EDNRB sub-subfamily.

It is found in the cell membrane. Non-specific receptor for endothelin 1, 2, and 3. Mediates its action by association with G proteins that activate a phosphatidylinositol-calcium second messenger system. In Oryctolagus cuniculus (Rabbit), this protein is Endothelin receptor type B (EDNRB).